The chain runs to 591 residues: Probable methyltransferase PMT6 (591 aa).

Residues 1-13 lie on the Cytoplasmic side of the membrane; the sequence is MRGSVIGAERSGQ. Residues 14–34 traverse the membrane as a helical; Signal-anchor for type II membrane protein segment; sequence TIMVALVLMVGSFYTGSLFGT. The Lumenal segment spans residues 35–591; the sequence is NQPIYVSHPS…FCRKRFWAII (557 aa). N-linked (GlcNAc...) asparagine glycosylation is found at Asn87, Asn99, Asn146, Asn193, Asn323, Asn436, Asn473, and Asn515.

It belongs to the methyltransferase superfamily.

The protein localises to the endoplasmic reticulum membrane. This chain is Probable methyltransferase PMT6, found in Arabidopsis thaliana (Mouse-ear cress).